Reading from the N-terminus, the 405-residue chain is Phosphoglycerate kinase (405 aa).

Substrate is bound by residues 24–26 (DFN), R40, 63–66 (HLGR), R122, and R162. ATP is bound by residues K212, E331, and 361-364 (GGDS).

The protein belongs to the phosphoglycerate kinase family. Monomer.

The protein resides in the cytoplasm. The enzyme catalyses (2R)-3-phosphoglycerate + ATP = (2R)-3-phospho-glyceroyl phosphate + ADP. It functions in the pathway carbohydrate degradation; glycolysis; pyruvate from D-glyceraldehyde 3-phosphate: step 2/5. The polypeptide is Phosphoglycerate kinase (pgk) (Corynebacterium glutamicum (strain ATCC 13032 / DSM 20300 / JCM 1318 / BCRC 11384 / CCUG 27702 / LMG 3730 / NBRC 12168 / NCIMB 10025 / NRRL B-2784 / 534)).